Consider the following 355-residue polypeptide: Ion-translocating oxidoreductase complex subunit D (355 aa).

The next 5 helical transmembrane spans lie at glycine 13–valine 33, valine 35–isoleucine 55, valine 77–isoleucine 97, leucine 98–asparagine 118, and valine 128–leucine 148. Threonine 186 bears the FMN phosphoryl threonine mark. Helical transmembrane passes span alanine 216–tryptophan 236, proline 245–alanine 265, alanine 267–alanine 287, proline 294–isoleucine 314, and glycine 318–isoleucine 338.

This sequence belongs to the NqrB/RnfD family. In terms of assembly, the complex is composed of six subunits: RnfA, RnfB, RnfC, RnfD, RnfE and RnfG. The cofactor is FMN.

Its subcellular location is the cell inner membrane. In terms of biological role, part of a membrane-bound complex that couples electron transfer with translocation of ions across the membrane. This chain is Ion-translocating oxidoreductase complex subunit D, found in Actinobacillus succinogenes (strain ATCC 55618 / DSM 22257 / CCUG 43843 / 130Z).